A 150-amino-acid chain; its full sequence is D-aminoacyl-tRNA deacylase (150 aa).

The short motif at 137-138 is the Gly-cisPro motif, important for rejection of L-amino acids element; it reads GP.

The protein belongs to the DTD family. Homodimer.

It localises to the cytoplasm. It catalyses the reaction glycyl-tRNA(Ala) + H2O = tRNA(Ala) + glycine + H(+). The catalysed reaction is a D-aminoacyl-tRNA + H2O = a tRNA + a D-alpha-amino acid + H(+). In terms of biological role, an aminoacyl-tRNA editing enzyme that deacylates mischarged D-aminoacyl-tRNAs. Also deacylates mischarged glycyl-tRNA(Ala), protecting cells against glycine mischarging by AlaRS. Acts via tRNA-based rather than protein-based catalysis; rejects L-amino acids rather than detecting D-amino acids in the active site. By recycling D-aminoacyl-tRNA to D-amino acids and free tRNA molecules, this enzyme counteracts the toxicity associated with the formation of D-aminoacyl-tRNA entities in vivo and helps enforce protein L-homochirality. The protein is D-aminoacyl-tRNA deacylase of Alkalilimnicola ehrlichii (strain ATCC BAA-1101 / DSM 17681 / MLHE-1).